Consider the following 457-residue polypeptide: tRNA-2-methylthio-N(6)-dimethylallyladenosine synthase (457 aa).

In terms of domain architecture, MTTase N-terminal spans 3 to 120 (KKVYVKTFGC…LPQMIDKRRE (118 aa)). [4Fe-4S] cluster is bound by residues cysteine 12, cysteine 49, cysteine 83, cysteine 157, cysteine 161, and cysteine 164. The Radical SAM core domain occupies 143–377 (RVDGPSAFVS…QATIEENVQR (235 aa)). One can recognise a TRAM domain in the interval 380-447 (DSMVGKIERI…PHSLRGELVL (68 aa)).

It belongs to the methylthiotransferase family. MiaB subfamily. Monomer. The cofactor is [4Fe-4S] cluster.

Its subcellular location is the cytoplasm. It carries out the reaction N(6)-dimethylallyladenosine(37) in tRNA + (sulfur carrier)-SH + AH2 + 2 S-adenosyl-L-methionine = 2-methylsulfanyl-N(6)-dimethylallyladenosine(37) in tRNA + (sulfur carrier)-H + 5'-deoxyadenosine + L-methionine + A + S-adenosyl-L-homocysteine + 2 H(+). In terms of biological role, catalyzes the methylthiolation of N6-(dimethylallyl)adenosine (i(6)A), leading to the formation of 2-methylthio-N6-(dimethylallyl)adenosine (ms(2)i(6)A) at position 37 in tRNAs that read codons beginning with uridine. The chain is tRNA-2-methylthio-N(6)-dimethylallyladenosine synthase from Paraburkholderia phytofirmans (strain DSM 17436 / LMG 22146 / PsJN) (Burkholderia phytofirmans).